We begin with the raw amino-acid sequence, 284 residues long: Cell division protein FtsQ (284 aa).

The segment covering 1–10 (MAFGKSKNRR) has biased composition (basic residues). The disordered stretch occupies residues 1 to 23 (MAFGKSKNRRRQDAAQQKEAVRG). At 1–34 (MAFGKSKNRRRQDAAQQKEAVRGAVRSQGPRALK) the chain is on the cytoplasmic side. The chain crosses the membrane as a helical span at residues 35–52 (VLGLTLGTGLLVWGGAAL). Topologically, residues 53–284 (REWTLTSPRF…ASERSGASMR (232 aa)) are periplasmic. The POTRA domain maps to 62–130 (FELEAVSFSG…NRVSVEVTEH (69 aa)).

This sequence belongs to the FtsQ/DivIB family. FtsQ subfamily.

The protein localises to the cell inner membrane. Essential cell division protein. The sequence is that of Cell division protein FtsQ from Myxococcus fulvus (strain ATCC BAA-855 / HW-1).